The following is a 114-amino-acid chain: Cytochrome c2 (114 aa).

Position 1 is a pyrrolidone carboxylic acid (Q1). C13, C16, H17, and M93 together coordinate heme c.

It belongs to the cytochrome c family. Post-translationally, binds 1 heme c group covalently per subunit.

Its subcellular location is the periplasm. Functionally, cytochrome c2 is found mainly in purple, non-sulfur, photosynthetic bacteria where it functions as the electron donor to the oxidized bacteriochlorophyll in the photophosphorylation pathway. However, it may also have a role in the respiratory chain and is found in some non-photosynthetic bacteria. The polypeptide is Cytochrome c2 (Rhodopseudomonas palustris).